The primary structure comprises 196 residues: Regulator of G-protein signaling 1 (196 aa).

The interval 1-27 (MPGMFFSANPKDLKGTDQSLLDDKTQK) is disordered. The span at 11–25 (KDLKGTDQSLLDDKT) shows a compositional bias: basic and acidic residues. The RGS domain maps to 72-187 (SLEKLLANQT…LKSNIYLNLL (116 aa)).

As to quaternary structure, interacts with GNAI1 and GNAQ.

The protein localises to the cell membrane. It localises to the cytoplasm. It is found in the cytosol. Functionally, regulates G protein-coupled receptor signaling cascades, including signaling downstream of the N-formylpeptide chemoattractant receptors and leukotriene receptors. Inhibits B cell chemotaxis toward CXCL12. Inhibits signal transduction by increasing the GTPase activity of G protein alpha subunits, thereby driving them into their inactive GDP-bound form. This chain is Regulator of G-protein signaling 1 (RGS1), found in Equus caballus (Horse).